The primary structure comprises 148 residues: Receptor activity-modifying protein 1 (148 aa).

The signal sequence occupies residues 1-26 (MAPGLRGLPRCGLWLLLAHHLFMVTA). Disulfide bonds link cysteine 27–cysteine 82, cysteine 40–cysteine 72, and cysteine 57–cysteine 104. Residues 27–118 (CRDPDYGTLI…RALRDPPNSI (92 aa)) lie on the Extracellular side of the membrane. Residues 119–140 (LCPFIALPITVTLLMTALVVWR) traverse the membrane as a helical segment. The Cytoplasmic portion of the chain corresponds to 141 to 148 (SKRTEGIV).

This sequence belongs to the RAMP family. As to quaternary structure, heterodimer of CALCRL and RAMP1; the interaction induces allosteric modulation of CALCRL function and CGRP1/CALCA and CGRP2/CALCB ligand specificity. Heterodimer of CALCR and RAMP1; interaction forms the AMYR1 receptor complex for amylin/IAPP and CGRP1/CALCA ligands. In terms of tissue distribution, expressed predominantly in the thymus, skeletal muscle, embryonic and adult brain, embryonic and adult lung, and colon.

It is found in the cell membrane. Accessory protein that interacts with and modulates the function of G-protein coupled receptors including calcitonin gene-related peptide type 1 receptor (CALCRL) and calcitonin receptor (CALCR). Required for the transport of CALCRL to the plasma membrane. Together with CALCRL, form the receptor complex for the calcitonin gene-related peptides CGRP1/CALCA and CGRP2/CALCB. Together with CALCR, form the AMYR1 receptor complex for amylin/IAPP and CGRP1/CALCA. In Mus musculus (Mouse), this protein is Receptor activity-modifying protein 1.